A 392-amino-acid chain; its full sequence is Major outer membrane protein P.IA (392 aa).

The first 19 residues, 1–19, serve as a signal peptide directing secretion; sequence MRKKLTALVLSALPLAAVA.

This sequence belongs to the Gram-negative porin family. As to quaternary structure, homotrimer.

It localises to the cell outer membrane. Serves as a slightly cation selective porin. Major antigen on the gonococcal cell surface and it may have pathogenic properties in addition to its porin activity. The chain is Major outer membrane protein P.IA (porA) from Neisseria meningitidis serogroup B / serotype 15 (strain H44/76).